A 386-amino-acid chain; its full sequence is MMNPPVDLPYIPDDLLLNCLARVSRLYYPILSLVSKRFRSLVASLELYEIRKLLGHREKCLYLNLRFSSESEPRWFTLCRRPTRSPNPNFNSGWFASCFIPHTMKKEKKSSDNNLMVPVPTSNFITPPSELTRITNGSNIYIVRVFTNGAFSSRFLFMDCRSHTLHEVPRMDKTKKKPFMIRVLDGKIYVIEGCKNPDYSNLIERFDLKTQTWEHVPSPSAEIRGSYITGSLVYDGKLYLFGDKRVVYKPKENKWDVVGLEMPLRWTPSYISCVVDNVIYSYGRSRVLMWYNTEERLWRYLKGLKKLPKLPKDCTCVRLLGYSGKVVVLWEKNVGGGDPQKKMIWCAEIALERRSANKIYGKIEWCDVVLTLPRSCSLLNFAAVTV.

Positions 5–51 (PVDLPYIPDDLLLNCLARVSRLYYPILSLVSKRFRSLVASLELYEIR) constitute an F-box domain. Kelch repeat units follow at residues 187–236 (KIYV…VYDG), 238–285 (LYLF…YGRS), and 287–324 (VLMW…GYSG).

The polypeptide is Putative F-box/kelch-repeat protein At4g11750 (Arabidopsis thaliana (Mouse-ear cress)).